The primary structure comprises 195 residues: Probable GTP-binding protein EngB (195 aa).

The 174-residue stretch at 22-195 (GRPEVALAGR…WAALLPFLTE (174 aa)) folds into the EngB-type G domain. Residues 30–37 (GRSNVGKS), 57–61 (GKTQT), 75–78 (DVPG), 142–145 (TKAD), and 174–176 (FSS) each bind GTP. Ser37 and Thr59 together coordinate Mg(2+).

The protein belongs to the TRAFAC class TrmE-Era-EngA-EngB-Septin-like GTPase superfamily. EngB GTPase family. Requires Mg(2+) as cofactor.

Functionally, necessary for normal cell division and for the maintenance of normal septation. This is Probable GTP-binding protein EngB from Geobacillus thermodenitrificans (strain NG80-2).